Consider the following 492-residue polypeptide: N-succinylglutamate 5-semialdehyde dehydrogenase (492 aa).

An NAD(+)-binding site is contributed by 220–225 (GSANTG). Active-site residues include E243 and C277.

Belongs to the aldehyde dehydrogenase family. AstD subfamily.

It catalyses the reaction N-succinyl-L-glutamate 5-semialdehyde + NAD(+) + H2O = N-succinyl-L-glutamate + NADH + 2 H(+). It functions in the pathway amino-acid degradation; L-arginine degradation via AST pathway; L-glutamate and succinate from L-arginine: step 4/5. Catalyzes the NAD-dependent reduction of succinylglutamate semialdehyde into succinylglutamate. This Escherichia coli (strain 55989 / EAEC) protein is N-succinylglutamate 5-semialdehyde dehydrogenase.